The chain runs to 113 residues: Insulin-like peptide 02 (113 aa).

An N-terminal signal peptide occupies residues M1 to P22. Residues V23–R42 constitute a propeptide that is removed on maturation. 3 disulfide bridges follow: C44–C99, C56–C112, and C98–C103. Positions R62–R87 are cleaved as a propeptide — c peptide.

The protein belongs to the insulin family.

Its subcellular location is the secreted. Functionally, insulin decreases blood glucose concentration. May have evolved to activate insulin receptors (INSR) in vertebrates. Molecular docking studies reveals unique interaction with the human insulin receptor. In vivo, insulin-like peptide injection reduces blood glucose levels in two models of zebrafish diabetes (streptozotocin- and glucose-induced). Also shorter swimming distance of zebrafish larvae, an effect which is not observed with human insulin. The polypeptide is Insulin-like peptide 02 (Exaiptasia diaphana (Tropical sea anemone)).